Consider the following 222-residue polypeptide: MSAVVQREALLKKIDEALKSGKKRRFRQSVELIVVLRGIDLSKPENRINLLVELPHPPKLNKIAAFAHGAFETQAKNAGVDAVITRQEVEGLAGNKRAIRKLAKQYDFFIAPPDLMPLLGRVIGPIFGPRGKMPEVVPPNVDVKTVVERLRRVVRVRLRNEPVIKVRVGAEGQKPEEILTNILAVLEELNRKFPLRQYLRDIYIKKTMSPPVRIKPAEVLAR.

It belongs to the universal ribosomal protein uL1 family. As to quaternary structure, part of the 50S ribosomal subunit.

Binds directly to 23S rRNA. Probably involved in E site tRNA release. Functionally, protein L1 is also a translational repressor protein, it controls the translation of its operon by binding to its mRNA. In Pyrobaculum calidifontis (strain DSM 21063 / JCM 11548 / VA1), this protein is Large ribosomal subunit protein uL1.